A 320-amino-acid polypeptide reads, in one-letter code: Glutathione synthetase (320 aa).

The 186-residue stretch at 130 to 315 folds into the ATP-grasp domain; that stretch reads KIFTSWFPDL…ITGMLLDYIE (186 aa). 156-212 serves as a coordination point for ATP; the sequence is WEKYQDIIIKPLDAMGGANIFRIKKNDPNFSVIVENMTNYERKYCMVQNYLPEIKLG. Residues Glu-286 and Asn-288 each coordinate Mg(2+).

This sequence belongs to the prokaryotic GSH synthase family. Requires Mg(2+) as cofactor. It depends on Mn(2+) as a cofactor.

It carries out the reaction gamma-L-glutamyl-L-cysteine + glycine + ATP = glutathione + ADP + phosphate + H(+). It participates in sulfur metabolism; glutathione biosynthesis; glutathione from L-cysteine and L-glutamate: step 2/2. This Buchnera aphidicola subsp. Acyrthosiphon pisum (strain APS) (Acyrthosiphon pisum symbiotic bacterium) protein is Glutathione synthetase.